A 259-amino-acid chain; its full sequence is uncharacterized protein (259 aa).

6 helical membrane-spanning segments follow: residues Ile-9–Leu-31, Leu-84–Phe-106, Phe-126–Gly-148, Ser-153–Val-175, His-196–Ala-215, and Thr-230–Gly-252.

The protein resides in the cell membrane. This is an uncharacterized protein from Archaeoglobus fulgidus (strain ATCC 49558 / DSM 4304 / JCM 9628 / NBRC 100126 / VC-16).